A 277-amino-acid polypeptide reads, in one-letter code: Undecaprenyl-diphosphatase (277 aa).

Helical transmembrane passes span 3-23 (YIIE…TEIF), 48-68 (LTLF…IYYF), 97-117 (ISYA…GLLI), 125-145 (LLSI…VFLL), 198-218 (SFLC…YDAI), 227-247 (IPGF…TIKI), and 257-277 (LIWF…LYII).

The protein belongs to the UppP family.

It localises to the cell membrane. The enzyme catalyses di-trans,octa-cis-undecaprenyl diphosphate + H2O = di-trans,octa-cis-undecaprenyl phosphate + phosphate + H(+). Catalyzes the dephosphorylation of undecaprenyl diphosphate (UPP). Confers resistance to bacitracin. This Acholeplasma laidlawii (strain PG-8A) protein is Undecaprenyl-diphosphatase.